Reading from the N-terminus, the 424-residue chain is Interferon regulatory factor 8 (424 aa).

The IRF tryptophan pentad repeat DNA-binding region spans 7–114 (GRRLRQWLIE…EPYKVYRIVP (108 aa)).

The protein belongs to the IRF family. As to quaternary structure, interacts with COPS2. Interacts (via C-terminus) with TRIM21 (via C-terminus). Interacts with the BATF-JUNB heterodimer. Interacts with BATF (via bZIP domain); the interaction is direct. Interacts with SPI1. Post-translationally, ubiquitinated. Ubiquitination by TRIM21 in macrophages, a process that is strongly increased upon interferon gamma stimulation, leds to the enhanced transcriptional activity of target cytokine genes. Ubiquitination leads to its degradation by the proteasome. In terms of processing, sumoylated with SUMO3. Desumoylated by SENP1. As to expression, expressed in bone marrow macrophages (at protein level). Mainly expressed in lymphoid tissues. Predominantly expressed in CD8(+)-expressing dendritic cells.

It is found in the nucleus. Its subcellular location is the cytoplasm. Functionally, transcription factor that specifically binds to the upstream regulatory region of type I interferon (IFN) and IFN-inducible MHC class I genes (the interferon consensus sequence (ICS)). Can both act as a transcriptional activator or repressor. Plays a negative regulatory role in cells of the immune system. Involved in CD8(+) dendritic cell differentiation by forming a complex with the BATF-JUNB heterodimer in immune cells, leading to recognition of AICE sequence (5'-TGAnTCA/GAAA-3'), an immune-specific regulatory element, followed by cooperative binding of BATF and IRF8 and activation of genes. Required for the development of plasmacytoid dendritic cells (pDCs), which produce most of the type I IFN in response to viral infection. Positively regulates macroautophagy in dendritic cells. Acts as a transcriptional repressor of osteoclast differentiation factors such as NFATC1 and EEIG1. The chain is Interferon regulatory factor 8 from Mus musculus (Mouse).